The primary structure comprises 392 residues: MAMPTIRHVRAFIVRGGGADYHDQPGGHWIDDHISTPMARYPEYRQSRQSFGINVLGTLVVEIEASDGTVGFAVTTGGEIGAFIVEKHLARFLEGQLVTDIEKMWDQMYFSTLYYGRKGVVLNTISGVDLALWDLLAKVRKEPVYQLLGGPVRDELVFYATGARPDLAKEMGFIGGKLPLQHGPAEGDAGLRQNLDKLAEMRSRVGDDFWLMYDCWMSLDVPYATRLAQAAHEYGLKWIEECLPPDDYWGYAELRRNVPRGMMVSTGEHEATRWGFRMLLEMQCCDLIQPDVGWCGGITELIKISALADAHNVMVVPHGSSVYSYHFVVTRHNSPFAEFLMMAPKADEVVPMFTPLLLDEPVPVNGRMKVPDAPGFGVRLNPECALVRPYAR.

Residues His-22 and Arg-48 each contribute to the substrate site. Mg(2+) is bound by residues Asp-214, Glu-240, and Glu-268. His-318 functions as the Proton acceptor in the catalytic mechanism. Position 338 (Glu-338) interacts with substrate.

It belongs to the mandelate racemase/muconate lactonizing enzyme family. RhamD subfamily. In terms of assembly, homooctamer; tetramer of dimers. Requires Mg(2+) as cofactor.

The enzyme catalyses L-rhamnonate = 2-dehydro-3-deoxy-L-rhamnonate + H2O. In terms of biological role, catalyzes the dehydration of L-rhamnonate to 2-keto-3-deoxy-L-rhamnonate (KDR). This Paraburkholderia xenovorans (strain LB400) protein is L-rhamnonate dehydratase.